A 455-amino-acid polypeptide reads, in one-letter code: Ribulose bisphosphate carboxylase large chain (455 aa).

K5 is subject to N6,N6,N6-trimethyllysine. Substrate is bound by residues N114 and T164. The Proton acceptor role is filled by K166. Residue K168 coordinates substrate. Residues K192, D194, and E195 each coordinate Mg(2+). K192 is modified (N6-carboxylysine). H285 serves as the catalytic Proton acceptor. Substrate-binding residues include R286, H318, and S370.

Belongs to the RuBisCO large chain family. Type I subfamily. As to quaternary structure, heterohexadecamer of 8 large chains and 8 small chains; disulfide-linked. The disulfide link is formed within the large subunit homodimers. Mg(2+) serves as cofactor. The disulfide bond which can form in the large chain dimeric partners within the hexadecamer appears to be associated with oxidative stress and protein turnover.

Its subcellular location is the plastid. It localises to the chloroplast. The enzyme catalyses 2 (2R)-3-phosphoglycerate + 2 H(+) = D-ribulose 1,5-bisphosphate + CO2 + H2O. It catalyses the reaction D-ribulose 1,5-bisphosphate + O2 = 2-phosphoglycolate + (2R)-3-phosphoglycerate + 2 H(+). In terms of biological role, ruBisCO catalyzes two reactions: the carboxylation of D-ribulose 1,5-bisphosphate, the primary event in carbon dioxide fixation, as well as the oxidative fragmentation of the pentose substrate in the photorespiration process. Both reactions occur simultaneously and in competition at the same active site. The sequence is that of Ribulose bisphosphate carboxylase large chain from Lupinus arcticus (Arctic lupine).